We begin with the raw amino-acid sequence, 753 residues long: Ribosome biogenesis protein BOP1 homolog (753 aa).

Residues 1–155 (MTKRSKGANE…RNTVGNVPLK (155 aa)) are disordered. Composition is skewed to basic and acidic residues over residues 7-18 (GANEDKLIETKS) and 30-41 (KPVEAESLKEED). Composition is skewed to acidic residues over residues 64–75 (DDFDSDFSDSED) and 83–109 (EDGD…DDDG). Positions 110 to 121 (SEHVGSDNNEEH) are enriched in basic and acidic residues. A compositionally biased stretch (acidic residues) spans 122 to 142 (GSDEDSERGEAVEESDSSEDE). 6 WD repeats span residues 421–462 (GHTG…KVWQ), 464–502 (DEAI…DEEQ), 539–581 (RHFK…TQRL), 626–665 (TGLR…KPYK), 669–708 (NHPK…DLNQ), and 722–753 (SSKG…LYCH).

Belongs to the WD repeat BOP1/ERB1 family. Interacts with PES. Interacts with WDR12.

The protein resides in the nucleus. It localises to the nucleolus. The protein localises to the nucleoplasm. Required for maturation of ribosomal RNAs and formation of the large ribosomal subunit. Plays an essential role in cell growth and survival through its regulation of ribosome biogenesis and mitotic progression. In Arabidopsis thaliana (Mouse-ear cress), this protein is Ribosome biogenesis protein BOP1 homolog.